The chain runs to 305 residues: Ribosomal protein L11 methyltransferase (305 aa).

The S-adenosyl-L-methionine site is built by T155, G176, D198, and N241.

It belongs to the methyltransferase superfamily. PrmA family.

It localises to the cytoplasm. It carries out the reaction L-lysyl-[protein] + 3 S-adenosyl-L-methionine = N(6),N(6),N(6)-trimethyl-L-lysyl-[protein] + 3 S-adenosyl-L-homocysteine + 3 H(+). Functionally, methylates ribosomal protein L11. The chain is Ribosomal protein L11 methyltransferase from Carboxydothermus hydrogenoformans (strain ATCC BAA-161 / DSM 6008 / Z-2901).